The sequence spans 455 residues: MTTMTTAAAKAAEPTRTTAIASLHLLAELEGHSSRAWHLAWNPRMPILASCSGDKDVRLHAYSFVSTTSAQGASTCKHPSFNLREVIPTGHQRTVRQVAWSPDGKILATASFDSTVGIWERIQDIDGSSELQGNTDASGPVVLSNGGAHVDEPEWDCVGTLEGHESECKSVAFSYTGGVLASCSRDKSVWIWEVQPDAEFECLSVLMEHSQDVKVVAWHPNDEVLASASYDDAIKLYIDDPSDDWFCYTTLTGHESTVWSISFSPCGNYLASASDDLTVRIWRRLDADQCEAHGLRPEGKMAGRRGEKWIAVNILNGYHDRTVYSVSWGVDKTSTRPGNLGRIASGGGDGRICVYEVTASDDEKSLQPKVELIAKMERAHASADVNCVSWAPESLNARGGTTAKIEQLTDEGETLNKGGQHASHELMSDMLASAGDDGSVKVWTLASSAYAATSK.

WD repeat units follow at residues 31–70, 90–129, 163–202, 208–247, 253–292, 318–365, and 380–453; these read GHSSRAWHLAWNPRMPILASCSGDKDVRLHAYSFVSTTSA, GHQRTVRQVAWSPDGKILATASFDSTVGIWERIQDIDGSS, GHESECKSVAFSYTGGVLASCSRDKSVWIWEVQPDAEFEC, EHSQDVKVVAWHPNDEVLASASYDDAIKLYIDDPSDDWFC, GHESTVWSISFSPCGNYLASASDDLTVRIWRRLDADQCEA, YHDR…DEKS, and HASA…YAAT.

This sequence belongs to the WD repeat CIA1 family.

Functionally, essential component of the cytosolic iron-sulfur (Fe/S) protein assembly machinery. Required for the maturation of extramitochondrial Fe/S proteins. This is Probable cytosolic iron-sulfur protein assembly protein 1 from Mycosarcoma maydis (Corn smut fungus).